A 370-amino-acid polypeptide reads, in one-letter code: Anhydro-N-acetylmuramic acid kinase (370 aa).

An ATP-binding site is contributed by 13–20 (GTSMDGVD).

It belongs to the anhydro-N-acetylmuramic acid kinase family.

The enzyme catalyses 1,6-anhydro-N-acetyl-beta-muramate + ATP + H2O = N-acetyl-D-muramate 6-phosphate + ADP + H(+). The protein operates within amino-sugar metabolism; 1,6-anhydro-N-acetylmuramate degradation. It functions in the pathway cell wall biogenesis; peptidoglycan recycling. Its function is as follows. Catalyzes the specific phosphorylation of 1,6-anhydro-N-acetylmuramic acid (anhMurNAc) with the simultaneous cleavage of the 1,6-anhydro ring, generating MurNAc-6-P. Is required for the utilization of anhMurNAc either imported from the medium or derived from its own cell wall murein, and thus plays a role in cell wall recycling. The sequence is that of Anhydro-N-acetylmuramic acid kinase from Vibrio vulnificus (strain YJ016).